Consider the following 438-residue polypeptide: GTPase Obg (438 aa).

One can recognise an Obg domain in the interval 1–159 (MAFRDVLNIE…RRVRLELRLI (159 aa)). One can recognise an OBG-type G domain in the interval 160–332 (ADVGLVGYPN…LRETLFQLLP (173 aa)). ATP-binding positions include 166 to 173 (GYPNAGKS), 191 to 195 (FTTLS), 219 to 222 (DIPG), 285 to 288 (NKVE), and 313 to 315 (SAK). The Mg(2+) site is built by S173 and T193. Positions 357–435 (IVFREDAPAK…IGTFRFEYFD (79 aa)) constitute an OCT domain.

The protein belongs to the TRAFAC class OBG-HflX-like GTPase superfamily. OBG GTPase family. Monomer. Mg(2+) serves as cofactor.

It localises to the cytoplasm. Its function is as follows. An essential GTPase which binds GTP, GDP and possibly (p)ppGpp with moderate affinity, with high nucleotide exchange rates and a fairly low GTP hydrolysis rate. Plays a role in control of the cell cycle, stress response, ribosome biogenesis and in those bacteria that undergo differentiation, in morphogenesis control. The sequence is that of GTPase Obg from Deinococcus radiodurans (strain ATCC 13939 / DSM 20539 / JCM 16871 / CCUG 27074 / LMG 4051 / NBRC 15346 / NCIMB 9279 / VKM B-1422 / R1).